We begin with the raw amino-acid sequence, 718 residues long: Coiled-coil domain-containing protein 157 (718 aa).

Positions 300 to 603 (LRAQLEDAEG…LTKIREVAQQ (304 aa)) form a coiled coil. Basic and acidic residues predominate over residues 469–482 (RGSLDEAEAQRSEL). Disordered regions lie at residues 469-490 (RGSL…QSLQ) and 617-690 (PPYK…TQNP). Residues 639 to 659 (TGRRQSPGSRTSSTGRTHPGG) are compositionally biased toward low complexity.

This Mus musculus (Mouse) protein is Coiled-coil domain-containing protein 157 (Ccdc157).